Reading from the N-terminus, the 435-residue chain is DMATS-type prenyltransferase fscG (435 aa).

Dimethylallyl diphosphate is bound by residues R111, K193, Y195, R259, K261, Y263, Y352, and Y423.

This sequence belongs to the tryptophan dimethylallyltransferase family.

It participates in secondary metabolite biosynthesis. Functionally, DMATS-type prenyltransferase; part of the fragmented gene cluster that mediates the biosynthesis of fusarochromene, a tryptophan-derived metabolite closely related to a group of mycotoxins including fusarochromanone. Within the pathway, fscG catalyzes the prenylation of the primary alcohol produced by fscA which is necessary for the formation of the chromene ring by the oxidoreductase fscI. The first step of the pathway is the epimerization of L-tryptophan to D-tryptophan in the presence of the NRPS-like tryptophan epimerase fscC. D-tryptophan is subsequently hydroxylated by the tryptophan 6-hydroxylase fscE to yield 6-hydroxytryptophan. The pyrrole ring undergoes cleavaged by the tryptophan 2,3-dioxygenase fscD and is finally converted to 4-hydroxykyrunenine by the hydrolase fscH. The NRPS-like oxidoreductase fscA reduces the carboxyl group to primary alcohol and the DMATS-type prenyltransferase fscG performs prenylation, followed by the formation of a chromene ring catalyzed by the oxidoreductase fscI, which leads to desacetylfusarochromene. Epoxidation by fscF and rearrangement reactions of chromene double bonds convert compound desacetylfusarochromene to fusarochromanones. Although specific acetyltransferases were not found near the fsc gene cluster, several predicted enzymes containing the N-acetyltransferase superfamily domain are present in the genome of F.equiseti. These predicted enzymes may have the potential to convert desacetylfusarochromene to fusarochromene. This is DMATS-type prenyltransferase fscG from Fusarium equiseti (Fusarium scirpi).